Reading from the N-terminus, the 255-residue chain is S-adenosyl-L-methionine-dependent uroporphyrinogen III methyltransferase (255 aa).

S-adenosyl-L-homocysteine contacts are provided by residues proline 15, 91 to 93 (GGD), 121 to 122 (TS), methionine 175, and alanine 232.

The protein belongs to the precorrin methyltransferase family. As to quaternary structure, homodimer.

The enzyme catalyses uroporphyrinogen III + 2 S-adenosyl-L-methionine = precorrin-2 + 2 S-adenosyl-L-homocysteine + H(+). It functions in the pathway porphyrin-containing compound metabolism; siroheme biosynthesis; precorrin-2 from uroporphyrinogen III: step 1/1. Functionally, involved in the archaeal biosynthesis of heme. Catalyzes the methylation of carbons 2 and 7 of uroporphyrinogen-III (UROGEN) to yield precorrin-2. It does not catalyze the overmethylation of precorrin-2 to trimethylpyrrocorphin. This chain is S-adenosyl-L-methionine-dependent uroporphyrinogen III methyltransferase, found in Methanosarcina barkeri (strain Fusaro / DSM 804).